A 49-amino-acid chain; its full sequence is Large ribosomal subunit protein bL32 (49 aa).

The protein belongs to the bacterial ribosomal protein bL32 family.

This Nitratiruptor sp. (strain SB155-2) protein is Large ribosomal subunit protein bL32.